The primary structure comprises 691 residues: Protein 4.2 (691 aa).

A lipid anchor (N-myristoyl glycine) is attached at glycine 2. Residues 31–39 are band 3 binding; it reads LTLRRGQSF. Serine 248 is modified (phosphoserine). Residue tyrosine 570 is modified to Phosphotyrosine.

This sequence belongs to the transglutaminase superfamily. Transglutaminase family. In terms of assembly, component of the ankyrin-1 complex in the erythrocyte, composed of ANK1, RHCE, RHAG, SLC4A1, EPB42, GYPA, GYPB and AQP1. Interacts with SLC4A1 (via the cytoplasmic domain); this interaction is mediated by the SLC4A1 Band 3-I dimer. Interacts with ANK1 (via ANK 1-13 repeats). Interacts with AQP1 (via the C-terminal).

Its subcellular location is the cell membrane. It localises to the cytoplasm. The protein resides in the cytoskeleton. Component of the ankyrin-1 complex, a multiprotein complex involved in the stability and shape of the erythrocyte membrane. This is Protein 4.2 from Mus musculus (Mouse).